Reading from the N-terminus, the 311-residue chain is MKKLKVAIVGSGNIGTDLMIKILRHGQHLEMGALVGIDPDSDGLARAARLGVATTAEGVEGLARLPGFGEIDFVFDATSAAAHVKNDPFLRGLRPGLRLIDLTPAAVGPYCVPVVNLEQNLREPNVNMVTCGGQATIPMVAAVSRVARVHYAEIVASIASRSAGPGTRANIDEFTETTSKAIEAIGGARKGKAIIVLNPAEPPLIMRDTVYVLSAPADQARVEASLAEMAQAVQGYVPGYRLKQRVQFDEIPDAAPLNIPGLGRLSGLKTSVFLEVEGAAHYLPAYAGNLDIMTSAALATAERMAQSMLNA.

11 to 14 (SGNI) contributes to the NAD(+) binding site. The active-site Acyl-thioester intermediate is the C131. NAD(+) is bound by residues 162-170 (SAGPGTRAN) and N289.

It belongs to the acetaldehyde dehydrogenase family.

It carries out the reaction acetaldehyde + NAD(+) + CoA = acetyl-CoA + NADH + H(+). The polypeptide is Acetaldehyde dehydrogenase 2 (mhpF) (Azotobacter vinelandii (strain DJ / ATCC BAA-1303)).